The primary structure comprises 103 residues: G0/G1 switch protein 2 (103 aa).

As to quaternary structure, directly interacts with BCL2; this interaction prevents the formation of the anti-apoptotic BAX-BCL2 complex.

The protein resides in the mitochondrion. Promotes apoptosis by binding to BCL2, hence preventing the formation of protective BCL2-BAX heterodimers. This chain is G0/G1 switch protein 2 (G0s2), found in Rattus norvegicus (Rat).